Reading from the N-terminus, the 71-residue chain is Large ribosomal subunit protein uL29 (71 aa).

A disordered region spans residues 32–51 (GVNKSTGGAPSNPGKISETK).

The protein belongs to the universal ribosomal protein uL29 family.

In Methanococcus maripaludis (strain DSM 14266 / JCM 13030 / NBRC 101832 / S2 / LL), this protein is Large ribosomal subunit protein uL29.